The chain runs to 134 residues: Phosphoribosyl-AMP cyclohydrolase (134 aa).

Residue Asp80 participates in Mg(2+) binding. A Zn(2+)-binding site is contributed by Cys81. Residues Asp82 and Asp84 each coordinate Mg(2+). 2 residues coordinate Zn(2+): Cys98 and Cys105.

The protein belongs to the PRA-CH family. As to quaternary structure, homodimer. The cofactor is Mg(2+). Requires Zn(2+) as cofactor.

The protein resides in the cytoplasm. The enzyme catalyses 1-(5-phospho-beta-D-ribosyl)-5'-AMP + H2O = 1-(5-phospho-beta-D-ribosyl)-5-[(5-phospho-beta-D-ribosylamino)methylideneamino]imidazole-4-carboxamide. Its pathway is amino-acid biosynthesis; L-histidine biosynthesis; L-histidine from 5-phospho-alpha-D-ribose 1-diphosphate: step 3/9. In terms of biological role, catalyzes the hydrolysis of the adenine ring of phosphoribosyl-AMP. The chain is Phosphoribosyl-AMP cyclohydrolase from Bordetella avium (strain 197N).